The sequence spans 357 residues: Peptide chain release factor 1 (357 aa).

Position 236 is an N5-methylglutamine (glutamine 236).

It belongs to the prokaryotic/mitochondrial release factor family. Post-translationally, methylated by PrmC. Methylation increases the termination efficiency of RF1.

It is found in the cytoplasm. Functionally, peptide chain release factor 1 directs the termination of translation in response to the peptide chain termination codons UAG and UAA. The sequence is that of Peptide chain release factor 1 from Mycobacterium sp. (strain JLS).